Reading from the N-terminus, the 82-residue chain is Small ribosomal subunit protein bS16 (82 aa).

Belongs to the bacterial ribosomal protein bS16 family.

This is Small ribosomal subunit protein bS16 from Pectobacterium carotovorum subsp. carotovorum (strain PC1).